The following is a 691-amino-acid chain: Elongation factor G (691 aa).

Residues 8-283 form the tr-type G domain; sequence KKVRNIGIAA…AVVAYLPAPD (276 aa). Residues 17-24, 81-85, and 135-138 contribute to the GTP site; these read AHIDAGKT, DTPGH, and NKMD.

Belongs to the TRAFAC class translation factor GTPase superfamily. Classic translation factor GTPase family. EF-G/EF-2 subfamily.

Its subcellular location is the cytoplasm. Catalyzes the GTP-dependent ribosomal translocation step during translation elongation. During this step, the ribosome changes from the pre-translocational (PRE) to the post-translocational (POST) state as the newly formed A-site-bound peptidyl-tRNA and P-site-bound deacylated tRNA move to the P and E sites, respectively. Catalyzes the coordinated movement of the two tRNA molecules, the mRNA and conformational changes in the ribosome. In Campylobacter jejuni subsp. jejuni serotype O:6 (strain 81116 / NCTC 11828), this protein is Elongation factor G.